The following is a 211-amino-acid chain: RNA chaperone ProQ (211 aa).

The disordered stretch occupies residues 113–147 (RRAVEKANNPKANKKRSVYHSGNKSENKKSAGKKF).

This sequence belongs to the ProQ family.

The protein resides in the cytoplasm. In terms of biological role, RNA chaperone with significant RNA binding, RNA strand exchange and RNA duplexing activities. The protein is RNA chaperone ProQ of Histophilus somni (strain 129Pt) (Haemophilus somnus).